A 508-amino-acid polypeptide reads, in one-letter code: Maturase K (508 aa).

It belongs to the intron maturase 2 family. MatK subfamily.

It is found in the plastid. The protein resides in the chloroplast. Usually encoded in the trnK tRNA gene intron. Probably assists in splicing its own and other chloroplast group II introns. This is Maturase K from Wolffia arrhiza (Rootless water-meal).